We begin with the raw amino-acid sequence, 469 residues long: Sorting and assembly machinery component 50 homolog (469 aa).

A POTRA domain is found at 45-125; it reads VVVQHVHFDG…LDVTFEVTEL (81 aa). At K255 the chain carries N6-methyllysine.

It belongs to the SAM50/omp85 family. Associates with the mitochondrial contact site and cristae organizing system (MICOS) complex, composed of at least MICOS10/MIC10, CHCHD3/MIC19, CHCHD6/MIC25, APOOL/MIC27, IMMT/MIC60, APOO/MIC23/MIC26 and QIL1/MIC13. This complex was also known under the names MINOS or MitOS complex. The MICOS complex associates with mitochondrial outer membrane proteins SAMM50, MTX1 and MTX2 (together described as components of the mitochondrial outer membrane sorting assembly machinery (SAM) complex) and DNAJC11, mitochondrial inner membrane protein TMEM11 and with HSPA9. The MICOS and SAM complexes together with DNAJC11 are part of a large protein complex spanning both membranes termed the mitochondrial intermembrane space bridging (MIB) complex. Interacts with IMMT/MIC60. Interacts with CHCHD3/MIC19. Interacts with ARMC1. As to quaternary structure, (Microbial infection) Interacts with parasite T.gondii RH strain MAF1b1; the interaction is probably indirect and results in the disruption of the MIB complex and the formation of SPOTs (structures positive for outer mitochondrial membrane (OMM)), a cellular response to OMM stress, which leads to the constitutive shedding of OMM vesicles.

The protein localises to the mitochondrion outer membrane. It is found in the cytoplasm. It localises to the mitochondrion. Plays a crucial role in the maintenance of the structure of mitochondrial cristae and the proper assembly of the mitochondrial respiratory chain complexes. Required for the assembly of TOMM40 into the TOM complex. The protein is Sorting and assembly machinery component 50 homolog (Samm50) of Mus musculus (Mouse).